The following is a 340-amino-acid chain: Trimethylamine N-oxide transport system ATP-binding protein TmoW (340 aa).

One can recognise an ABC transporter domain in the interval 32–268 (GRSFDDIRAD…PTTGYVAKFT (237 aa)). 64-71 (GLSGSGKS) is an ATP binding site.

This sequence belongs to the ABC transporter superfamily. The complex is probably composed of two ATP-binding proteins (TmoW), two transmembrane proteins (TmoV) and a solute-binding protein (TmoX).

The protein localises to the cell inner membrane. The catalysed reaction is a quaternary ammonium(out) + ATP + H2O = a quaternary ammonium(in) + ADP + phosphate + H(+). Part of the ABC transporter complex TmoXWV involved in trimethylamine N-oxide (TMAO) import. Responsible for energy coupling to the transport system. Is specific for TMAO and essential for TMAO metabolism. The polypeptide is Trimethylamine N-oxide transport system ATP-binding protein TmoW (Ruegeria pomeroyi (strain ATCC 700808 / DSM 15171 / DSS-3) (Silicibacter pomeroyi)).